We begin with the raw amino-acid sequence, 130 residues long: Small ribosomal subunit protein uS8 (130 aa).

This sequence belongs to the universal ribosomal protein uS8 family. Part of the 30S ribosomal subunit.

Functionally, one of the primary rRNA binding proteins, it binds directly to 16S rRNA central domain where it helps coordinate assembly of the platform of the 30S subunit. This is Small ribosomal subunit protein uS8 from Pyrobaculum islandicum (strain DSM 4184 / JCM 9189 / GEO3).